The sequence spans 306 residues: Probable protein ABIL1 (306 aa).

The interval 200–236 (KNSKTNGARQSEFVLEETKATKPASRGKEPSTSPLPK) is disordered.

It belongs to the ABI family. Binds SCAR.

The protein resides in the cytoplasm. It is found in the cytoskeleton. In terms of biological role, involved in regulation of actin and microtubule organization. Part of a WAVE complex that activates the Arp2/3 complex. The sequence is that of Probable protein ABIL1 from Oryza sativa subsp. japonica (Rice).